The sequence spans 134 residues: Small ribosomal subunit protein uS8c (134 aa).

It belongs to the universal ribosomal protein uS8 family. Part of the 30S ribosomal subunit.

The protein resides in the plastid. The protein localises to the chloroplast. Functionally, one of the primary rRNA binding proteins, it binds directly to 16S rRNA central domain where it helps coordinate assembly of the platform of the 30S subunit. This is Small ribosomal subunit protein uS8c (rps8) from Pelargonium hortorum (Common geranium).